Here is a 449-residue protein sequence, read N- to C-terminus: Chromosomal replication initiator protein DnaA (449 aa).

The tract at residues 1–72 (MPNLEELWAY…VEGVYEFAQL (72 aa)) is domain I, interacts with DnaA modulators. Positions 72–109 (LEVDPVIMTKDELQPAPATDQRPAVEEDDQNLTFKAKT) are domain II. The tract at residues 110–326 (HLNPKYTFDH…GALVRVQAFS (217 aa)) is domain III, AAA+ region. Residues G154, G156, K157, and T158 each coordinate ATP. Residues 327–449 (TMKNEDITTS…ELRNILKNRG (123 aa)) form a domain IV, binds dsDNA region.

It belongs to the DnaA family. In terms of assembly, oligomerizes as a right-handed, spiral filament on DNA at oriC.

It is found in the cytoplasm. In terms of biological role, plays an essential role in the initiation and regulation of chromosomal replication. ATP-DnaA binds to the origin of replication (oriC) to initiate formation of the DNA replication initiation complex once per cell cycle. Binds the DnaA box (a 9 base pair repeat at the origin) and separates the double-stranded (ds)DNA. Forms a right-handed helical filament on oriC DNA; dsDNA binds to the exterior of the filament while single-stranded (ss)DNA is stabiized in the filament's interior. The ATP-DnaA-oriC complex binds and stabilizes one strand of the AT-rich DNA unwinding element (DUE), permitting loading of DNA polymerase. After initiation quickly degrades to an ADP-DnaA complex that is not apt for DNA replication. Binds acidic phospholipids. The polypeptide is Chromosomal replication initiator protein DnaA (Lacticaseibacillus paracasei (strain ATCC 334 / BCRC 17002 / CCUG 31169 / CIP 107868 / KCTC 3260 / NRRL B-441) (Lactobacillus paracasei)).